Consider the following 257-residue polypeptide: Imidazole glycerol phosphate synthase subunit HisF (257 aa).

Catalysis depends on residues Asp-11 and Asp-130.

The protein belongs to the HisA/HisF family. Heterodimer of HisH and HisF.

The protein localises to the cytoplasm. The catalysed reaction is 5-[(5-phospho-1-deoxy-D-ribulos-1-ylimino)methylamino]-1-(5-phospho-beta-D-ribosyl)imidazole-4-carboxamide + L-glutamine = D-erythro-1-(imidazol-4-yl)glycerol 3-phosphate + 5-amino-1-(5-phospho-beta-D-ribosyl)imidazole-4-carboxamide + L-glutamate + H(+). It participates in amino-acid biosynthesis; L-histidine biosynthesis; L-histidine from 5-phospho-alpha-D-ribose 1-diphosphate: step 5/9. IGPS catalyzes the conversion of PRFAR and glutamine to IGP, AICAR and glutamate. The HisF subunit catalyzes the cyclization activity that produces IGP and AICAR from PRFAR using the ammonia provided by the HisH subunit. The sequence is that of Imidazole glycerol phosphate synthase subunit HisF from Shewanella baltica (strain OS223).